We begin with the raw amino-acid sequence, 463 residues long: uncharacterized protein (463 aa).

The protein belongs to the mycobacterial PPE family.

This is an uncharacterized protein from Mycobacterium tuberculosis (strain ATCC 25618 / H37Rv).